The primary structure comprises 383 residues: Cobalt-precorrin-5B C(1)-methyltransferase (383 aa).

The protein belongs to the CbiD family.

The catalysed reaction is Co-precorrin-5B + S-adenosyl-L-methionine = Co-precorrin-6A + S-adenosyl-L-homocysteine. The protein operates within cofactor biosynthesis; adenosylcobalamin biosynthesis; cob(II)yrinate a,c-diamide from sirohydrochlorin (anaerobic route): step 6/10. Functionally, catalyzes the methylation of C-1 in cobalt-precorrin-5B to form cobalt-precorrin-6A. This is Cobalt-precorrin-5B C(1)-methyltransferase from Prochlorococcus marinus (strain MIT 9313).